We begin with the raw amino-acid sequence, 456 residues long: UDP-N-acetylglucosamine 1-carboxyvinyltransferase (456 aa).

A phosphoenolpyruvate-binding site is contributed by 34–35 (KN). Residue Arg104 coordinates UDP-N-acetyl-alpha-D-glucosamine. Cys128 functions as the Proton donor in the catalytic mechanism. Cys128 carries the post-translational modification 2-(S-cysteinyl)pyruvic acid O-phosphothioketal. 2 residues coordinate UDP-N-acetyl-alpha-D-glucosamine: Asp319 and Ile341.

This sequence belongs to the EPSP synthase family. MurA subfamily.

It is found in the cytoplasm. It carries out the reaction phosphoenolpyruvate + UDP-N-acetyl-alpha-D-glucosamine = UDP-N-acetyl-3-O-(1-carboxyvinyl)-alpha-D-glucosamine + phosphate. It functions in the pathway cell wall biogenesis; peptidoglycan biosynthesis. Its function is as follows. Cell wall formation. Adds enolpyruvyl to UDP-N-acetylglucosamine. This chain is UDP-N-acetylglucosamine 1-carboxyvinyltransferase, found in Prochlorococcus marinus (strain MIT 9301).